The following is a 111-amino-acid chain: MSDIPAGDYEKGKKVYKQRCLQCHVVDSTATKTGPTLHGVIGRTSGTVSGFDYSAANKNKGVVWTKETLFEYLLNPKKYIPGTKMVFAGLKKADERADLIKYIEVESAKSL.

Ser2 is modified (N-acetylserine). Heme c is bound by residues Cys20, Cys23, His24, and Met85.

This sequence belongs to the cytochrome c family. In terms of processing, binds 1 heme c group covalently per subunit.

It is found in the mitochondrion intermembrane space. In terms of biological role, electron carrier protein. The oxidized form of the cytochrome c heme group can accept an electron from the heme group of the cytochrome c1 subunit of cytochrome reductase. Cytochrome c then transfers this electron to the cytochrome oxidase complex, the final protein carrier in the mitochondrial electron-transport chain. This is Cytochrome c 2.1 (cyc-2.1) from Caenorhabditis elegans.